The following is a 384-amino-acid chain: MVRQLALACGLLAAVAVQAAPAEPAHPMVTEAPDASLLHKRATTCTFSGSEGASKVSKSKTACSTIYLSALAVPSGTTLDLKDLNDGTHVIFEGETTFGYEEWEGPLVSVSGTDITVEGASGAVLNGDGSRWWDGEGGNGGKTKPKFFAAHDLTSSTIKSIYIENSPVQVFSIDGATDLTLTDITIDNTDGDTDDLAANTDGFDIGESTDITITGAKVYNQDDCVAINSGENIYFSASVCSGGHGLSIGSVGGRDDNTVKNVTFYDVNVLKSQQAIRIKAIYGDTGSISDITYHEIAFSDATDYGIVIEQNYDDTSKTPTTGVPITDFTLENVIGTCADDDCTEVYIACGSGACSDWSWSSVSVTGGKVSSKCLNVPSGISCDL.

The first 19 residues, methionine 1–alanine 19, serve as a signal peptide directing secretion. A propeptide spanning residues alanine 20 to lysine 40 is cleaved from the precursor. A disulfide bridge links cysteine 45 with cysteine 63. 2 PbH1 repeats span residues alanine 176–glutamate 207 and serine 208–serine 229. Aspartate 222 serves as the catalytic Proton donor. The cysteines at positions 224 and 240 are disulfide-linked. The active site involves histidine 244. PbH1 repeat units lie at residues arginine 254–alanine 280 and isoleucine 288–glutamine 310. A glycan (N-linked (GlcNAc...) asparagine) is linked at asparagine 261. Intrachain disulfides connect cysteine 349/cysteine 354 and cysteine 373/cysteine 382.

It belongs to the glycosyl hydrolase 28 family.

It is found in the secreted. The catalysed reaction is (1,4-alpha-D-galacturonosyl)n+m + H2O = (1,4-alpha-D-galacturonosyl)n + (1,4-alpha-D-galacturonosyl)m.. Functionally, involved in maceration and soft-rotting of plant tissue. Hydrolyzes the 1,4-alpha glycosidic bonds of de-esterified pectate in the smooth region of the plant cell wall. This Aspergillus aculeatus protein is Probable endopolygalacturonase C (pgaC).